The primary structure comprises 397 residues: Elongation factor Tu (397 aa).

One can recognise a tr-type G domain in the interval 10-206 (KPHVNIGTIG…AIDSYIPTPE (197 aa)). Residues 19–26 (GHVDHGKT) are G1. 19-26 (GHVDHGKT) serves as a coordination point for GTP. Thr-26 contributes to the Mg(2+) binding site. The G2 stretch occupies residues 60-64 (GITIN). Residues 81 to 84 (DCPG) are G3. GTP contacts are provided by residues 81 to 85 (DCPGH) and 136 to 139 (NKAD). The segment at 136–139 (NKAD) is G4. Residues 174 to 176 (SAL) form a G5 region.

The protein belongs to the TRAFAC class translation factor GTPase superfamily. Classic translation factor GTPase family. EF-Tu/EF-1A subfamily. As to quaternary structure, monomer.

It localises to the cytoplasm. The catalysed reaction is GTP + H2O = GDP + phosphate + H(+). Functionally, GTP hydrolase that promotes the GTP-dependent binding of aminoacyl-tRNA to the A-site of ribosomes during protein biosynthesis. The polypeptide is Elongation factor Tu (Clostridium botulinum (strain ATCC 19397 / Type A)).